A 306-amino-acid chain; its full sequence is Probable arylamine N-acetyltransferase 3 (306 aa).

The Acyl-thioester intermediate role is filled by cysteine 75. Active-site residues include histidine 115 and aspartate 130.

Belongs to the arylamine N-acetyltransferase family.

It carries out the reaction an arylamine + acetyl-CoA = an N-acetylarylamine + CoA. This chain is Probable arylamine N-acetyltransferase 3, found in Dictyostelium discoideum (Social amoeba).